The primary structure comprises 259 residues: Ribosomal RNA small subunit methyltransferase A (259 aa).

N13, T15, G40, E61, D85, and N105 together coordinate S-adenosyl-L-methionine.

Belongs to the class I-like SAM-binding methyltransferase superfamily. rRNA adenine N(6)-methyltransferase family. RsmA subfamily.

It localises to the cytoplasm. The enzyme catalyses adenosine(1518)/adenosine(1519) in 16S rRNA + 4 S-adenosyl-L-methionine = N(6)-dimethyladenosine(1518)/N(6)-dimethyladenosine(1519) in 16S rRNA + 4 S-adenosyl-L-homocysteine + 4 H(+). In terms of biological role, specifically dimethylates two adjacent adenosines (A1518 and A1519) in the loop of a conserved hairpin near the 3'-end of 16S rRNA in the 30S particle. May play a critical role in biogenesis of 30S subunits. The protein is Ribosomal RNA small subunit methyltransferase A of Mycoplasma genitalium (strain ATCC 33530 / DSM 19775 / NCTC 10195 / G37) (Mycoplasmoides genitalium).